Reading from the N-terminus, the 201-residue chain is Probable nicotinate-nucleotide adenylyltransferase (201 aa).

It belongs to the NadD family.

The enzyme catalyses nicotinate beta-D-ribonucleotide + ATP + H(+) = deamido-NAD(+) + diphosphate. It participates in cofactor biosynthesis; NAD(+) biosynthesis; deamido-NAD(+) from nicotinate D-ribonucleotide: step 1/1. Catalyzes the reversible adenylation of nicotinate mononucleotide (NaMN) to nicotinic acid adenine dinucleotide (NaAD). In Neisseria gonorrhoeae (strain ATCC 700825 / FA 1090), this protein is Probable nicotinate-nucleotide adenylyltransferase.